Reading from the N-terminus, the 925-residue chain is Isoleucine--tRNA ligase (925 aa).

A 'HIGH' region motif is present at residues 57–67 (PYANGDIHIGH). Position 553 (Glu553) interacts with L-isoleucyl-5'-AMP. Positions 594–598 (KMSKS) match the 'KMSKS' region motif. Position 597 (Lys597) interacts with ATP. Residues Cys889, Cys892, Cys909, and Cys912 each contribute to the Zn(2+) site.

This sequence belongs to the class-I aminoacyl-tRNA synthetase family. IleS type 1 subfamily. Monomer. It depends on Zn(2+) as a cofactor.

Its subcellular location is the cytoplasm. The catalysed reaction is tRNA(Ile) + L-isoleucine + ATP = L-isoleucyl-tRNA(Ile) + AMP + diphosphate. Catalyzes the attachment of isoleucine to tRNA(Ile). As IleRS can inadvertently accommodate and process structurally similar amino acids such as valine, to avoid such errors it has two additional distinct tRNA(Ile)-dependent editing activities. One activity is designated as 'pretransfer' editing and involves the hydrolysis of activated Val-AMP. The other activity is designated 'posttransfer' editing and involves deacylation of mischarged Val-tRNA(Ile). The protein is Isoleucine--tRNA ligase of Brevibacillus brevis (strain 47 / JCM 6285 / NBRC 100599).